The chain runs to 114 residues: uncharacterized protein (114 aa).

The stretch at 31 to 72 forms a coiled coil; it reads EFEKLVSEQMKTMDKLLDLQSELDRCKQIEAELRHLERDARL.

This is an uncharacterized protein from Bacillus subtilis (strain 168).